A 276-amino-acid polypeptide reads, in one-letter code: RNA-binding protein pno-1 (276 aa).

2 disordered regions span residues 1-30 (MATS…VPST) and 62-101 (DVVM…SRVV). The span at 8–27 (FDDEFPMEEGMPELLDDEDV) shows a compositional bias: acidic residues. The KH domain occupies 197-249 (GDHVSRAIGRIAGKDGRTKLVIENTTKTRIVVANTKIHILGAYQNLKLARNAV).

Belongs to the PNO1 family. Part of the small subunit (SSU) processome, composed of more than 70 proteins and the RNA chaperone small nucleolar RNA (snoRNA) U3.

The protein resides in the nucleus. The protein localises to the nucleolus. Its function is as follows. Part of the small subunit (SSU) processome, first precursor of the small eukaryotic ribosomal subunit. During the assembly of the SSU processome in the nucleolus, many ribosome biogenesis factors, an RNA chaperone and ribosomal proteins associate with the nascent pre-rRNA and work in concert to generate RNA folding, modifications, rearrangements and cleavage as well as targeted degradation of pre-ribosomal RNA by the RNA exosome. Positively regulates dimethylation of two adjacent adenosines in the loop of a conserved hairpin near the 3'-end of 18S rRNA. The polypeptide is RNA-binding protein pno-1 (Caenorhabditis briggsae).